A 130-amino-acid chain; its full sequence is Small ribosomal subunit protein uS11 (130 aa).

A compositionally biased stretch (basic residues) spans 1-15 (MARPTKKSGPRKQKR). A disordered region spans residues 1–21 (MARPTKKSGPRKQKRNVPSGV).

The protein belongs to the universal ribosomal protein uS11 family. As to quaternary structure, part of the 30S ribosomal subunit. Interacts with proteins S7 and S18. Binds to IF-3.

Functionally, located on the platform of the 30S subunit, it bridges several disparate RNA helices of the 16S rRNA. Forms part of the Shine-Dalgarno cleft in the 70S ribosome. The chain is Small ribosomal subunit protein uS11 from Synechococcus elongatus (strain ATCC 33912 / PCC 7942 / FACHB-805) (Anacystis nidulans R2).